The chain runs to 144 residues: UPF0299 membrane protein MS1271 (144 aa).

4 consecutive transmembrane segments (helical) span residues 5–25 (IFLF…GEGI), 28–48 (LIPI…IGLT), 57–77 (VFFG…PVSV), and 92–112 (SLLI…GFLG).

Belongs to the UPF0299 family.

It is found in the cell inner membrane. In Mannheimia succiniciproducens (strain KCTC 0769BP / MBEL55E), this protein is UPF0299 membrane protein MS1271.